The sequence spans 256 residues: Lysosomal membrane ascorbate-dependent ferrireductase CYB561A3 (256 aa).

Residues 1–3 (MAS) are Cytoplasmic-facing. A helical membrane pass occupies residues 4-24 (GWFYMSCMVLGSLGSMCILFT). The Cytochrome b561 domain occupies 12–219 (VLGSLGSMCI…FGLLVLYILL (208 aa)). The Lumenal segment spans residues 25-40 (TYWMQYWRGGFAWDGT). A helical membrane pass occupies residues 41–61 (VLMFNWHPVLMVSGMVVLYGA). Heme b contacts are provided by H47 and R67. The Cytoplasmic portion of the chain corresponds to 62–83 (ASLVYRLPASWVGPKLPWKVLH). L-ascorbate-binding residues include K76 and K80. H83 serves as a coordination point for heme b. Residues 84–104 (AALHLLAFTVTVVGLTAVFGF) form a helical membrane-spanning segment. The Lumenal segment spans residues 105 to 119 (HNHSKITHLYSLHSW). N-linked (GlcNAc...) asparagine glycosylation occurs at N106. Residues 112–115 (HLYS) and H117 each bind heme b. The helical transmembrane segment at 120-140 (LGITTVALFACQWFLGFAVFL) threads the bilayer. The Cytoplasmic segment spans residues 141-154 (LPWASQWLRSLLKP). L-ascorbate is bound at residue R149. The helical transmembrane segment at 155–175 (VHVFFGACILSLSIASVISGI) threads the bilayer. Residues H156 and E177 each coordinate heme b. At 176–202 (NEKLFFVLKNATRPYSSLPGEAVFANS) the chain is on the lumenal side. Residues 203–223 (TGILVVSFGLLVLYILLASSW) form a helical membrane-spanning segment. R224 provides a ligand contact to heme b. Residues 224–256 (RRPDPGALTDRQVWLLVSHYRWDKAKKACFAPC) lie on the Cytoplasmic side of the membrane.

In terms of assembly, homodimer. Heme b is required as a cofactor. N-glycosylated.

It localises to the late endosome membrane. The protein resides in the lysosome membrane. It catalyses the reaction Fe(3+)(out) + L-ascorbate(in) = monodehydro-L-ascorbate radical(in) + Fe(2+)(out) + H(+). Transmembrane reductase that uses ascorbate as an electron donor in the cytoplasm and transfers electrons across membranes to reduce iron cations Fe(3+) into Fe(2+) in the lumen of the late endosome and lysosome. Reduced iron can then be extruded from the late endosome and lysosome to the cytoplasm by divalent metal-specific transporters. It is therefore most probably involved in endosomal and lysosomal cellular iron homeostasis. This chain is Lysosomal membrane ascorbate-dependent ferrireductase CYB561A3, found in Rattus norvegicus (Rat).